The sequence spans 467 residues: Probable citrate synthase 1, mitochondrial (467 aa).

Catalysis depends on residues histidine 303, histidine 349, and aspartate 404.

It belongs to the citrate synthase family. Homodimer.

The protein localises to the mitochondrion matrix. It catalyses the reaction oxaloacetate + acetyl-CoA + H2O = citrate + CoA + H(+). The protein operates within carbohydrate metabolism; tricarboxylic acid cycle; isocitrate from oxaloacetate: step 1/2. In Aedes aegypti (Yellowfever mosquito), this protein is Probable citrate synthase 1, mitochondrial.